The primary structure comprises 409 residues: 2,3-bisphosphoglycerate-independent phosphoglycerate mutase (409 aa).

The interval 160 to 179 is disordered; the sequence is ITDADPKHEGNKPKTVKPLD.

This sequence belongs to the BPG-independent phosphoglycerate mutase family. A-PGAM subfamily.

It catalyses the reaction (2R)-2-phosphoglycerate = (2R)-3-phosphoglycerate. It functions in the pathway carbohydrate degradation; glycolysis; pyruvate from D-glyceraldehyde 3-phosphate: step 3/5. Catalyzes the interconversion of 2-phosphoglycerate and 3-phosphoglycerate. This chain is 2,3-bisphosphoglycerate-independent phosphoglycerate mutase, found in Methanosphaera stadtmanae (strain ATCC 43021 / DSM 3091 / JCM 11832 / MCB-3).